The primary structure comprises 63 residues: Large ribosomal subunit protein bL35 (63 aa).

The interval 26–50 (GSGMRHNLEHKSARKRRALKRDDVL) is disordered.

Belongs to the bacterial ribosomal protein bL35 family.

The chain is Large ribosomal subunit protein bL35 from Bifidobacterium animalis subsp. lactis (strain AD011).